Reading from the N-terminus, the 603-residue chain is MNSFRESDEEDNNPFSGTNHLYASGIGAVPEGDDDFLSAEVDTADETVQETREQMMSRLFGECEGPRESSAGGWTSGSMGSIGAPDGHSDEVTEFGIDTVLVEGEVRTPGRARVPASYPDAEGSLGALRIVDAGQYKDTFGNYAIGYTIAYEGRQVTRRYSEFDSLRQALARLLPTVIIPPIPSKHPLIRYFLNPLNAENDIRIIEKRRRLLSRFLNNCHDITDIREHTVFQKFLNPEYIWSEVLLTPPVSILPTNNLLAPPLNPTKPSPLHLLLPTPPRRTTSYGSPKTNNPEYDIRFTELESLLLRYHKCLQPVLASSRQKKIHFKQLASSLADLGAYYNAFSLEDNVINLPHQMDQIRDLSRAIEKIGQAVDVNYVSSELLVENIMILLEEPIGEMLQFVQEGREVLRFRMQKQQQFHIIDTTIKKRRGRIEELRNFQAQLARLEAALKQNAEESPTIARAVQRLDAQHLHKQRKSPSGELQWTGLFKSRSGSVRTHDSLTTRPVTGDVDVDLLSDEERAREIARLEGDLEKLNECYKLIQRDMLQVNESMARSFDWFIMYLHDTWALVLRNYTRTLLNWLKDCLTAWKNARVTIDTIAV.

Residues 1 to 36 are disordered; it reads MNSFRESDEEDNNPFSGTNHLYASGIGAVPEGDDDF. Residues 121–241 enclose the PX domain; the sequence is AEGSLGALRI…QKFLNPEYIW (121 aa). Residues Arg159, Ser161, Lys185, and Arg208 each contribute to the a 1,2-diacyl-sn-glycero-3-phospho-(1D-myo-inositol-3-phosphate) site.

The protein belongs to the sorting nexin family.

The protein localises to the endosome membrane. It is found in the endomembrane system. May be required for cytoplasm to vacuole transport (Cvt) and pexophagy. In Eremothecium gossypii (strain ATCC 10895 / CBS 109.51 / FGSC 9923 / NRRL Y-1056) (Yeast), this protein is Sorting nexin-41 (SNX41).